Consider the following 1480-residue polypeptide: C-type mannose receptor 2 (1480 aa).

The signal sequence occupies residues 1-30 (MGPIRPALAPWPRHLLRCVLLLGGLRLGHP). Topologically, residues 31–1413 (ADSAAALLEP…SAALPENPVA (1383 aa)) are extracellular. One can recognise a Ricin B-type lectin domain in the interval 40-166 (PDVFLIFSQG…WNIYGSEEDL (127 aa)). 2 disulfides stabilise this stretch: Cys-53–Cys-67 and Cys-92–Cys-111. Residues Asn-101 and Asn-139 are each glycosylated (N-linked (GlcNAc...) asparagine). Residues 181–229 (SHGKPCTIPFKYDNQWFHGCTSTGREDGHLWCATTQDYGKDERWGFCPI) enclose the Fibronectin type-II domain. Cystine bridges form between Cys-186-Cys-212, Cys-200-Cys-227, Cys-265-Cys-358, and Cys-334-Cys-350. Residues 243–359 (LTDSCYQFNF…CSIALPYVCK (117 aa)) enclose the C-type lectin 1 domain. An N-linked (GlcNAc...) asparagine glycan is attached at Asn-363. C-type lectin domains lie at 388-504 (FQGH…SICK), 527-643 (HSPS…RYIC), 677-808 (KLRH…WICK), 831-950 (FQEA…YICK), 978-1106 (FLNK…GFIC), 1131-1242 (YLNR…GAVC), and 1271-1391 (FREH…GVVC). Disulfide bonds link Cys-409/Cys-503, Cys-480/Cys-495, Cys-617/Cys-634, Cys-703/Cys-807, Cys-784/Cys-799, Cys-852/Cys-949, and Cys-926/Cys-941. N-linked (GlcNAc...) asparagine glycosylation occurs at Asn-1028. A disulfide bridge links Cys-1077 with Cys-1097. Lys-1141 is covalently cross-linked (Glycyl lysine isopeptide (Lys-Gly) (interchain with G-Cter in SUMO1)). An intrachain disulfide couples Cys-1219 to Cys-1233. Asn-1348 carries an N-linked (GlcNAc...) asparagine glycan. A disulfide bond links Cys-1367 and Cys-1382. A helical membrane pass occupies residues 1414 to 1434 (LVVVLTAAVLLLLALLTGALI). At 1435 to 1480 (LYRRRQSAERGSFEGARYSRSSRSGPAEATEKNILVSDMEMNEQQE) the chain is on the cytoplasmic side. Residues 1446–1480 (SFEGARYSRSSRSGPAEATEKNILVSDMEMNEQQE) form a disordered region.

Interacts directly with PLAUR/UPAR and PLAU/pro-UPA to form a tri-molecular complex. Interacts with collagen V. Interacts with C-terminal region of type I collagen/COL1A1. N-glycosylated. Post-translationally, phosphorylated.

The protein resides in the cell membrane. Functionally, may play a role as endocytotic lectin receptor displaying calcium-dependent lectin activity. Internalizes glycosylated ligands from the extracellular space for release in an endosomal compartment via clathrin-mediated endocytosis. May be involved in plasminogen activation system controlling the extracellular level of PLAUR/PLAU, and thus may regulate protease activity at the cell surface. May contribute to cellular uptake, remodeling and degradation of extracellular collagen matrices. May participate in remodeling of extracellular matrix cooperating with the matrix metalloproteinases (MMPs) secreted by hepatic stellate cells. May mediate endocytosis of partially degraded collagens and glycoproteins produced in the extracellular matrix by MMPs. This is C-type mannose receptor 2 (Mrc2) from Rattus norvegicus (Rat).